A 166-amino-acid polypeptide reads, in one-letter code: Interferon gamma-related (166 aa).

Residues 1–26 (MYCRLNMVYLICALLLIVSLQGTVGA) form the signal peptide. Asn-91 is a glycosylation site (N-linked (GlcNAc...) asparagine).

This sequence belongs to the type II (or gamma) interferon family. As to quaternary structure, homodimer. Strongly expressed in spleen. Also detected at lower levels in gill, kidney, heart, brain and intestine. In immune cell populations, expressed at highest levels in peripheral blood leukocytes and at lower levels in splenocytes, granulocytes, monocytes and macrophages.

It is found in the secreted. In terms of biological role, cytokine which binds to interferon gamma receptor 1 (ifngr1). Has activating effects on primary macrophages. Induces nitric oxide production and phagocytic responses in macrophages. Primes monocytes for production of reactive oxygen intermediates (ROI), although the effect is short-lived. Also has inhibitory effects on monocyte priming by ifng1 (interferon gamma 1) and tnfb (TNF-alpha 2). Stimulates phosphorylation of the JAK/STAT signal transducer stat1, but fails to induce stat1 nuclear localization. Promotes increased expression of a number of genes important for macrophage activity, including the interferon regulatory factors irf2 and irf9. The chain is Interferon gamma-related from Carassius auratus (Goldfish).